A 445-amino-acid polypeptide reads, in one-letter code: Sporulation-specific glucan 1,3-beta-glucosidase (445 aa).

The N-terminal stretch at 1–21 is a signal peptide; that stretch reads MVSFRGLTTLTLLFTKLVNCN. A glycan (N-linked (GlcNAc...) asparagine) is linked at Asn-201. The active-site Proton donor is the Glu-233. Glu-335 serves as the catalytic Nucleophile.

It belongs to the glycosyl hydrolase 5 (cellulase A) family.

The protein localises to the secreted. It catalyses the reaction Successive hydrolysis of beta-D-glucose units from the non-reducing ends of (1-&gt;3)-beta-D-glucans, releasing alpha-glucose.. In terms of biological role, probably involved in the processes of spore formation and contributes to ascospore thermoresistance by participating in the morphogenesis of ascospore walls. The enzyme may do this by modifying glucan linkages in the developing ascospore wall, thus strengthening it or lending it plasticity. This chain is Sporulation-specific glucan 1,3-beta-glucosidase (SPR1), found in Saccharomyces cerevisiae (strain ATCC 204508 / S288c) (Baker's yeast).